The chain runs to 184 residues: NADH-quinone oxidoreductase subunit B (184 aa).

[4Fe-4S] cluster-binding residues include Cys37, Cys38, Cys103, and Cys132.

This sequence belongs to the complex I 20 kDa subunit family. NDH-1 is composed of 14 different subunits. Subunits NuoB, C, D, E, F, and G constitute the peripheral sector of the complex. It depends on [4Fe-4S] cluster as a cofactor.

The protein localises to the cell membrane. It carries out the reaction a quinone + NADH + 5 H(+)(in) = a quinol + NAD(+) + 4 H(+)(out). NDH-1 shuttles electrons from NADH, via FMN and iron-sulfur (Fe-S) centers, to quinones in the respiratory chain. The immediate electron acceptor for the enzyme in this species is believed to be a menaquinone. Couples the redox reaction to proton translocation (for every two electrons transferred, four hydrogen ions are translocated across the cytoplasmic membrane), and thus conserves the redox energy in a proton gradient. The polypeptide is NADH-quinone oxidoreductase subunit B (Mycolicibacterium gilvum (strain PYR-GCK) (Mycobacterium gilvum (strain PYR-GCK))).